A 491-amino-acid polypeptide reads, in one-letter code: Protein OrfX3 (491 aa).

The protein belongs to the TULIP P47 family. Heterodimer of OrfX1 and OrfX3; crystallizes as a dimer of heterodimers.

Functionally, expression of the ptox operon (ntnh-orfX1-orfX2-orfX3-pmp1) in B.thuringiensis kills Anopheles but not Aedes mosquito 3rd instar larvae. The ntnh-pmp1 construct is about half as toxic. This Paraclostridium bifermentans (Clostridium bifermentans) protein is Protein OrfX3.